The chain runs to 434 residues: Aspartate--tRNA(Asp/Asn) ligase (434 aa).

E167 is a binding site for L-aspartate. The interval 189-192 (QLFK) is aspartate. R211 contributes to the L-aspartate binding site. Residues 211–213 (RAE), 219–221 (RHL), and E357 each bind ATP. Positions 357 and 360 each coordinate Mg(2+). 2 residues coordinate L-aspartate: S360 and R364. 405-408 (GGER) is an ATP binding site.

It belongs to the class-II aminoacyl-tRNA synthetase family. Type 2 subfamily. Homodimer. Mg(2+) is required as a cofactor.

It localises to the cytoplasm. The enzyme catalyses tRNA(Asx) + L-aspartate + ATP = L-aspartyl-tRNA(Asx) + AMP + diphosphate. Its function is as follows. Aspartyl-tRNA synthetase with relaxed tRNA specificity since it is able to aspartylate not only its cognate tRNA(Asp) but also tRNA(Asn). Reaction proceeds in two steps: L-aspartate is first activated by ATP to form Asp-AMP and then transferred to the acceptor end of tRNA(Asp/Asn). The sequence is that of Aspartate--tRNA(Asp/Asn) ligase from Haloquadratum walsbyi (strain DSM 16790 / HBSQ001).